Consider the following 286-residue polypeptide: Octanoyltransferase (286 aa).

Residues L50 to I278 enclose the BPL/LPL catalytic domain. Substrate-binding positions include R89 to H96, S190 to G192, and G203 to A205. C221 acts as the Acyl-thioester intermediate in catalysis.

It belongs to the LipB family.

The protein localises to the cytoplasm. It catalyses the reaction octanoyl-[ACP] + L-lysyl-[protein] = N(6)-octanoyl-L-lysyl-[protein] + holo-[ACP] + H(+). Its pathway is protein modification; protein lipoylation via endogenous pathway; protein N(6)-(lipoyl)lysine from octanoyl-[acyl-carrier-protein]: step 1/2. Catalyzes the transfer of endogenously produced octanoic acid from octanoyl-acyl-carrier-protein onto the lipoyl domains of lipoate-dependent enzymes. Lipoyl-ACP can also act as a substrate although octanoyl-ACP is likely to be the physiological substrate. The protein is Octanoyltransferase of Psychrobacter arcticus (strain DSM 17307 / VKM B-2377 / 273-4).